The primary structure comprises 43 residues: Protein PsbN (43 aa).

The chain crosses the membrane as a helical span at residues T5 to F27.

It belongs to the PsbN family.

The protein localises to the plastid. The protein resides in the chloroplast thylakoid membrane. Its function is as follows. May play a role in photosystem I and II biogenesis. The polypeptide is Protein PsbN (Chara vulgaris (Common stonewort)).